The sequence spans 458 residues: Elongation factor 1-alpha (458 aa).

At Gly2 the chain carries N,N,N-trimethylglycine. An N6,N6-dimethyllysine; alternate modification is found at Lys3. The residue at position 3 (Lys3) is an N6-methyllysine; alternate. Residues 5 to 240 (KTHVNVVVIG…DAIEPPQRPT (236 aa)) form the tr-type G domain. The interval 14–21 (GHVDSGKS) is G1. 14–21 (GHVDSGKS) is a binding site for GTP. At Lys30 the chain carries N6-methyllysine. The G2 stretch occupies residues 70–74 (GITID). Lys79 bears the N6,N6,N6-trimethyllysine mark. A G3 region spans residues 91–94 (DAPG). GTP-binding positions include 91 to 95 (DAPGH) and 153 to 156 (NKMD). Residues 153–156 (NKMD) form a G4 region. The G5 stretch occupies residues 192 to 194 (SGW). Lys316 carries the N6,N6-dimethyllysine; alternate modification. Residue Lys316 is modified to N6-methyllysine; alternate. The residue at position 390 (Lys390) is an N6-methyllysine.

This sequence belongs to the TRAFAC class translation factor GTPase superfamily. Classic translation factor GTPase family. EF-Tu/EF-1A subfamily.

Its subcellular location is the cytoplasm. Its pathway is protein biosynthesis; polypeptide chain elongation. Its function is as follows. This protein promotes the GTP-dependent binding of aminoacyl-tRNA to the A-site of ribosomes during protein biosynthesis. This chain is Elongation factor 1-alpha (TEF1), found in Meyerozyma guilliermondii (strain ATCC 6260 / CBS 566 / DSM 6381 / JCM 1539 / NBRC 10279 / NRRL Y-324) (Yeast).